The chain runs to 593 residues: Protein PSP2 (593 aa).

Over residues 56 to 65 (AGEHQRDGHQ) the composition is skewed to basic and acidic residues. The tract at residues 56–101 (AGEHQRDGHQQHPHGGHGPMNRSRFSNAGPFGGGSMGDFANHHHPL) is disordered. A phosphoserine mark is found at S150 and S238. Disordered stretches follow at residues 227–248 (KPFI…KPVD) and 280–593 (DSMA…DMPL). Composition is skewed to polar residues over residues 231 to 241 (TKTQRSKSNPF) and 280 to 290 (DSMATTATGSK). S340 is subject to Phosphoserine. The span at 347-402 (SKPDKSDEFKGGDEQGFEKGGDDKAQLDVSNDKDKGSETDVDKQFTFKNVEREHSM) shows a compositional bias: basic and acidic residues. Residues 408–426 (NGNHNNNNGNFRGSNRYRG) show a composition bias toward low complexity. An omega-N-methylarginine mark is found at R419, R425, and R440. At R443 the chain carries Dimethylated arginine. Position 447 is an omega-N-methylarginine (R447). A compositionally biased stretch (low complexity) spans 449–477 (GSSYNNNNNNTNDNNNNNNNSSSNNNNGS). Composition is skewed to polar residues over residues 486–497 (EEGLTSDSSLDA) and 505–516 (FTNSTSNTQQYS). S522 is modified (phosphoserine). Positions 534–545 (RNNGRGNYNSSG) are enriched in low complexity. 3 positions are modified to omega-N-methylarginine: R538, R551, and R575. The segment covering 546 to 563 (MNGGSRGRGFGRGRGFGR) has biased composition (gly residues). Residues 578–587 (SGNYSNYNNR) show a composition bias toward low complexity.

It localises to the cytoplasm. The protein resides in the P-body. Its subcellular location is the stress granule. Functionally, DNA polymerase alpha mutation suppressor. Suppressor of group II intron splicing defects of a mutation in MRS2. May play a role in mitochondrial mRNA splicing. The sequence is that of Protein PSP2 from Saccharomyces cerevisiae (strain ATCC 204508 / S288c) (Baker's yeast).